Consider the following 242-residue polypeptide: Protein odd-skipped-related 1 (242 aa).

3 C2H2-type zinc fingers span residues 128–150 (FICK…ERTH), 156–178 (FHCE…KYIH), and 184–207 (HKCE…SCHH).

The protein belongs to the Odd C2H2-type zinc-finger protein family.

It localises to the nucleus. Functionally, may function as transcription regulator. Essential for larval development. Required for morphogenesis and function of the digestive tract. The chain is Protein odd-skipped-related 1 from Caenorhabditis elegans.